The primary structure comprises 64 residues: Small ribosomal subunit protein eS17 (64 aa).

It belongs to the eukaryotic ribosomal protein eS17 family.

This is Small ribosomal subunit protein eS17 from Halorubrum lacusprofundi (strain ATCC 49239 / DSM 5036 / JCM 8891 / ACAM 34).